A 352-amino-acid polypeptide reads, in one-letter code: Ion-translocating oxidoreductase complex subunit D (352 aa).

A run of 4 helical transmembrane segments spans residues 20-40 (IMLL…WFFG), 42-62 (GTLF…AIVL), 69-91 (VASH…SIPP), and 123-143 (PAMI…TSWL). Position 187 is an FMN phosphoryl threonine (threonine 187). 5 consecutive transmembrane segments (helical) span residues 215-235 (LAGV…VFLL), 242-262 (WHIP…GWLF), 267-287 (LASP…FFIL), 301-321 (LIFG…GGYP), and 322-342 (DGVA…DYYT).

This sequence belongs to the NqrB/RnfD family. The complex is composed of six subunits: RsxA, RsxB, RsxC, RsxD, RsxE and RsxG. FMN is required as a cofactor.

Its subcellular location is the cell inner membrane. Its function is as follows. Part of a membrane-bound complex that couples electron transfer with translocation of ions across the membrane. Required to maintain the reduced state of SoxR. This is Ion-translocating oxidoreductase complex subunit D from Salmonella paratyphi B (strain ATCC BAA-1250 / SPB7).